The chain runs to 571 residues: Proline--tRNA ligase (571 aa).

Belongs to the class-II aminoacyl-tRNA synthetase family. ProS type 1 subfamily. Homodimer.

It localises to the cytoplasm. It catalyses the reaction tRNA(Pro) + L-proline + ATP = L-prolyl-tRNA(Pro) + AMP + diphosphate. In terms of biological role, catalyzes the attachment of proline to tRNA(Pro) in a two-step reaction: proline is first activated by ATP to form Pro-AMP and then transferred to the acceptor end of tRNA(Pro). As ProRS can inadvertently accommodate and process non-cognate amino acids such as alanine and cysteine, to avoid such errors it has two additional distinct editing activities against alanine. One activity is designated as 'pretransfer' editing and involves the tRNA(Pro)-independent hydrolysis of activated Ala-AMP. The other activity is designated 'posttransfer' editing and involves deacylation of mischarged Ala-tRNA(Pro). The misacylated Cys-tRNA(Pro) is not edited by ProRS. The polypeptide is Proline--tRNA ligase (Pseudomonas aeruginosa (strain UCBPP-PA14)).